A 204-amino-acid polypeptide reads, in one-letter code: Thymidylate kinase (204 aa).

Position 10 to 17 (10 to 17 (GGDGAGKT)) interacts with ATP.

This sequence belongs to the thymidylate kinase family.

The catalysed reaction is dTMP + ATP = dTDP + ADP. Functionally, phosphorylation of dTMP to form dTDP in both de novo and salvage pathways of dTTP synthesis. The protein is Thymidylate kinase of Cutibacterium acnes (strain DSM 16379 / KPA171202) (Propionibacterium acnes).